The primary structure comprises 298 residues: Tyrosine recombinase XerC (298 aa).

In terms of domain architecture, Core-binding (CB) spans 1 to 84 (MNHIQDAFLN…TLRTFYEYWM (84 aa)). The Tyr recombinase domain maps to 105–286 (YLPQFFYEEE…SNQQLRKVYL (182 aa)). Active-site residues include Arg145, Lys169, His238, Arg241, and His264. The active-site O-(3'-phospho-DNA)-tyrosine intermediate is Tyr273.

Belongs to the 'phage' integrase family. XerC subfamily. In terms of assembly, forms a cyclic heterotetrameric complex composed of two molecules of XerC and two molecules of XerD.

Its subcellular location is the cytoplasm. Site-specific tyrosine recombinase, which acts by catalyzing the cutting and rejoining of the recombining DNA molecules. The XerC-XerD complex is essential to convert dimers of the bacterial chromosome into monomers to permit their segregation at cell division. It also contributes to the segregational stability of plasmids. This Staphylococcus aureus (strain USA300) protein is Tyrosine recombinase XerC.